Consider the following 208-residue polypeptide: A-type ATP synthase subunit E (208 aa).

The tract at residues 37 to 57 (DAEKTAEAEKNKILDNGKKQS) is disordered.

Belongs to the V-ATPase E subunit family. As to quaternary structure, has multiple subunits with at least A(3), B(3), C, D, E, F, H, I and proteolipid K(x).

It is found in the cell membrane. Its function is as follows. Component of the A-type ATP synthase that produces ATP from ADP in the presence of a proton gradient across the membrane. In Methanobrevibacter smithii (strain ATCC 35061 / DSM 861 / OCM 144 / PS), this protein is A-type ATP synthase subunit E.